The primary structure comprises 134 residues: Small ribosomal subunit protein uS9c (134 aa).

Positions 105–134 (QGYLTRNPLRKERKKYGLKKARKAPQFSKR) are disordered. The span at 115–134 (KERKKYGLKKARKAPQFSKR) shows a compositional bias: basic residues.

It belongs to the universal ribosomal protein uS9 family.

The protein localises to the plastid. Its subcellular location is the chloroplast. In Nephroselmis olivacea (Green alga), this protein is Small ribosomal subunit protein uS9c (rps9).